A 174-amino-acid polypeptide reads, in one-letter code: MEAPGPRALRTALCGGCCCLLLCAQLAVAGKGARGFGRGALIRLNIWPAVQGACKQLEVCEHCVEGDGARNLSSCVWEQCRPEEPGHCVAQSEVVKEGCSIYNRSEACPAAHHHPTYEPKTVTTGSPPVPEAHSPGFDGASFIGGVVLVLSLQAVAFFVLHFLKAKDSTYQTLI.

The first 29 residues, 1 to 29, serve as a signal peptide directing secretion; sequence MEAPGPRALRTALCGGCCCLLLCAQLAVA. At 30 to 141 the chain is on the extracellular side; it reads GKGARGFGRG…AHSPGFDGAS (112 aa). N-linked (GlcNAc...) asparagine glycans are attached at residues N71 and N103. The helical transmembrane segment at 142 to 162 threads the bilayer; that stretch reads FIGGVVLVLSLQAVAFFVLHF. Residues 163–174 lie on the Cytoplasmic side of the membrane; that stretch reads LKAKDSTYQTLI.

This sequence belongs to the CD164 family.

The protein resides in the membrane. The sequence is that of CD164 sialomucin-like 2 protein (CD164L2) from Homo sapiens (Human).